We begin with the raw amino-acid sequence, 58 residues long: Putative calcium channel toxin 196 (58 aa).

The signal sequence occupies residues 1–16 (GSLLLVLFLLSVICYA). The propeptide occupies 17 to 26 (EIAAGPTKCQ). Cystine bridges form between cysteine 25–cysteine 38, cysteine 31–cysteine 43, and cysteine 37–cysteine 52.

The protein belongs to the scorpion calcin-like family. KTX subfamily. As to expression, expressed by the venom gland.

The protein resides in the secreted. In terms of biological role, may inhibit voltage-gated potassium channels Kv1.1/KCNA1, hKv1.2/KCNA2, and Kv1.3/KCNA3. May also increase intracellular calcium release through the activation of nuclear inositol 1,4,5-trisphosphate receptors (ITPR) of cardiomyocytes, thereby causing an increase in the contraction frequency of these cells. The protein is Putative calcium channel toxin 196 of Lychas mucronatus (Chinese swimming scorpion).